A 310-amino-acid chain; its full sequence is Thioredoxin reductase (310 aa).

34–41 (NGMQPGGQ) contacts FAD. A disulfide bridge links Cys-135 with Cys-138. 281 to 290 (DVQDKIYRQA) is an FAD binding site.

This sequence belongs to the class-II pyridine nucleotide-disulfide oxidoreductase family. In terms of assembly, homodimer. It depends on FAD as a cofactor.

It is found in the cytoplasm. The catalysed reaction is [thioredoxin]-dithiol + NADP(+) = [thioredoxin]-disulfide + NADPH + H(+). This is Thioredoxin reductase (trxB) from Rickettsia typhi (strain ATCC VR-144 / Wilmington).